The following is a 746-amino-acid chain: Protein Niban 2 (746 aa).

A lipid anchor (N-myristoyl glycine) is attached at Gly-2. The PH domain maps to 68-192; it reads RIVFSGNLFQ…WQAVLQDCIR (125 aa). Residues Ser-568, Ser-574, Ser-601, and Ser-603 each carry the phosphoserine modification. The disordered stretch occupies residues 590–746; sequence GEEYSNSGGG…EDSAGVQTEF (157 aa). Thr-606 carries the phosphothreonine modification. Phosphoserine is present on residues Ser-609, Ser-624, Ser-638, Ser-641, Ser-646, Ser-665, Ser-681, Ser-692, and Ser-696. Over residues 671 to 693 the composition is skewed to low complexity; sequence PLLNGAPAGESPQPKAAPEASSP. Residues 720 to 746 are compositionally biased toward polar residues; sequence GEQVSSPSSHPALHTTTEDSAGVQTEF.

This sequence belongs to the Niban family. Post-translationally, phosphorylated at Ser-641, Ser-646, Ser-692 and Ser-696 by the BRAF/MKK/ERK signaling cascade. In melanoma cells, the C-terminal phosphorylation may prevent targeting to the plasma membrane. As apoptosis proceeds, degraded via an proteasome-independent pathway, probably by caspases.

The protein localises to the cytoplasm. It localises to the cytosol. The protein resides in the cell junction. Its subcellular location is the adherens junction. It is found in the membrane. May play a role in apoptosis suppression. May promote melanoma cell invasion in vitro. This Homo sapiens (Human) protein is Protein Niban 2.